A 644-amino-acid polypeptide reads, in one-letter code: UvrABC system protein C (644 aa).

The GIY-YIG domain occupies 47 to 125 (ARPGVYRMLD…IKRYRPPYNV (79 aa)). Residues 235–270 (TAVQKRLGEAMTRAADAMDFEQAAVLRDRLKALTFI) form the UVR domain.

Belongs to the UvrC family. Interacts with UvrB in an incision complex.

Its subcellular location is the cytoplasm. The UvrABC repair system catalyzes the recognition and processing of DNA lesions. UvrC both incises the 5' and 3' sides of the lesion. The N-terminal half is responsible for the 3' incision and the C-terminal half is responsible for the 5' incision. This chain is UvrABC system protein C, found in Sphingopyxis alaskensis (strain DSM 13593 / LMG 18877 / RB2256) (Sphingomonas alaskensis).